We begin with the raw amino-acid sequence, 66 residues long: Large ribosomal subunit protein bL33c (66 aa).

Belongs to the bacterial ribosomal protein bL33 family.

It is found in the plastid. The protein resides in the chloroplast. The sequence is that of Large ribosomal subunit protein bL33c from Eucalyptus globulus subsp. globulus (Tasmanian blue gum).